We begin with the raw amino-acid sequence, 431 residues long: Serine--tRNA ligase (431 aa).

Residue 238–240 (TAE) coordinates L-serine. 269–271 (RSE) contacts ATP. Glu-292 provides a ligand contact to L-serine. 356–359 (EISS) lines the ATP pocket. Residue Ser-391 coordinates L-serine.

It belongs to the class-II aminoacyl-tRNA synthetase family. Type-1 seryl-tRNA synthetase subfamily. As to quaternary structure, homodimer. The tRNA molecule binds across the dimer.

It is found in the cytoplasm. It carries out the reaction tRNA(Ser) + L-serine + ATP = L-seryl-tRNA(Ser) + AMP + diphosphate + H(+). The catalysed reaction is tRNA(Sec) + L-serine + ATP = L-seryl-tRNA(Sec) + AMP + diphosphate + H(+). It functions in the pathway aminoacyl-tRNA biosynthesis; selenocysteinyl-tRNA(Sec) biosynthesis; L-seryl-tRNA(Sec) from L-serine and tRNA(Sec): step 1/1. In terms of biological role, catalyzes the attachment of serine to tRNA(Ser). Is also able to aminoacylate tRNA(Sec) with serine, to form the misacylated tRNA L-seryl-tRNA(Sec), which will be further converted into selenocysteinyl-tRNA(Sec). This is Serine--tRNA ligase from Bdellovibrio bacteriovorus (strain ATCC 15356 / DSM 50701 / NCIMB 9529 / HD100).